A 647-amino-acid polypeptide reads, in one-letter code: Protein arginine N-methyltransferase 7 (647 aa).

SAM-dependent MTase PRMT-type domains follow at residues 12-332 and 337-647; these read EREW…FSLW and GKDK…SEDS. Catalysis depends on residues Glu-140 and Glu-149.

Belongs to the class I-like SAM-binding methyltransferase superfamily. Protein arginine N-methyltransferase family. PRMT7 subfamily.

Functionally, arginine methyltransferase that can both catalyze the formation of omega-N monomethylarginine (MMA) and symmetrical dimethylarginine (sDMA). In Caenorhabditis elegans, this protein is Protein arginine N-methyltransferase 7 (prmt-7).